The primary structure comprises 387 residues: Patatin-03 (387 aa).

The first 23 residues, 1–23 (MATTKSVLVLIFMILATTSSTFA), serve as a signal peptide directing secretion. Residues 32–230 (LSIDGGGIKG…TVADPALLSV (199 aa)) enclose the PNPLA domain. Residues 36–41 (GGGIKG) carry the GXGXXG motif. The short motif at 75–79 (GTSTG) is the GXSXG element. S77 functions as the Nucleophile in the catalytic mechanism. N-linked (GlcNAc...) asparagine glycosylation is found at N115 and N203. D216 acts as the Proton acceptor in catalysis. The DGA/G motif lies at 216–218 (DGA).

The protein belongs to the patatin family. As to expression, tuber.

It is found in the vacuole. In terms of biological role, probable lipolytic acyl hydrolase (LAH), an activity which is thought to be involved in the response of tubers to pathogens. This chain is Patatin-03, found in Solanum tuberosum (Potato).